The primary structure comprises 403 residues: Soluble calcium-activated nucleotidase 1 (403 aa).

Topologically, residues Met-1 to Arg-44 are cytoplasmic. Residues Val-45–Ser-61 traverse the membrane as a helical; Signal-anchor for type II membrane protein segment. Residues His-62–Ile-403 are Lumenal-facing. A glycan (N-linked (GlcNAc...) asparagine) is linked at Asn-90. Ca(2+)-binding residues include Ser-170, Asp-171, Glu-217, Glu-286, Ser-347, and Glu-398.

It belongs to the apyrase family. In terms of assembly, monomer. Homodimer; dimerization is Ca(2+)-dependent. Requires Ca(2+) as cofactor. Detected in intestine, thymus, heart, lung, spleen, kidney, liver, testis, skeletal muscle and brain.

The protein resides in the endoplasmic reticulum membrane. Its subcellular location is the golgi apparatus. The protein localises to the golgi stack membrane. The enzyme catalyses a ribonucleoside 5'-diphosphate + H2O = a ribonucleoside 5'-phosphate + phosphate + H(+). Calcium-dependent nucleotidase with a preference for UDP. The order of activity with different substrates is UDP &gt; GDP &gt; IDP &gt;&gt; UTP &gt; CDP = GTP = ITP. Has very low activity towards ADP and even lower activity towards ATP. Does not hydrolyze AMP and GMP. Involved in proteoglycan synthesis. This is Soluble calcium-activated nucleotidase 1 (Cant1) from Rattus norvegicus (Rat).